Reading from the N-terminus, the 68-residue chain is uncharacterized protein (68 aa).

This is an uncharacterized protein from Rickettsia prowazekii (strain Madrid E).